Consider the following 528-residue polypeptide: Ankyrin repeat and death domain-containing protein 1B (528 aa).

10 ANK repeats span residues 67–96 (PNER…NINV), 100–129 (MNRT…RVDV), 133–162 (HGLT…DQRA), 166–197 (DGMS…DLNQ), 201–230 (KGRK…HTSE), 234–263 (GGNT…DINE), 267–296 (LNIS…DLHQ), 300–329 (PKES…DIDI), 333–362 (KQQT…DLKA), and 366–395 (QGKT…YYAW). The Death domain maps to 427–515 (TLLWDLAYHQ…KLAEKTRHFK (89 aa)).

In Homo sapiens (Human), this protein is Ankyrin repeat and death domain-containing protein 1B (ANKDD1B).